A 793-amino-acid polypeptide reads, in one-letter code: Protein PAT1 homolog (793 aa).

Phosphoserine is present on residues S200 and S208. Disordered stretches follow at residues 203–256 (PPGS…TGNR) and 292–312 (MLQQ…GSQN). Residues 219–242 (PYQSGGPQMGSPNFSPFPNLQPQL) show a composition bias toward polar residues. Residues S342 and S343 each carry the phosphoserine modification. A disordered region spans residues 476-501 (RPLLEVDPPNSAKFGNAEHKPTDKPL). Basic and acidic residues predominate over residues 491 to 501 (NAEHKPTDKPL).

Interacts with MPK4 and SUMM2. Post-translationally, phosphorylated at Ser-208 by MPK4 upon flg22 elicitation. Phosphorylated at Ser-200, Ser-342 and Ser-343 upon flg22 elicitation.

Its subcellular location is the cytoplasm. The protein localises to the P-body. Functionally, activator of mRNA decapping. Involved in mRNA decay via decapping. Involved in disease resistance in response to biotrophic and necrotrophic pathogens. Is part of a signaling pathway including MPK4 and the disease resistance protein SUMM2. The protein is Protein PAT1 homolog of Arabidopsis thaliana (Mouse-ear cress).